A 553-amino-acid chain; its full sequence is ATP synthase F(1) complex subunit alpha, mitochondrial (553 aa).

The transit peptide at 1-43 (MLSVRVAAAVARALPRRAGLVSKNALGSSFIAARNLHASNSRL) directs the protein to the mitochondrion. Gln-44 is subject to Pyrrolidone carboxylic acid. 2 positions are modified to phosphoserine: Ser-53 and Ser-65. Residue Ser-76 is modified to Phosphoserine; alternate. An O-linked (GlcNAc) serine; alternate glycan is attached at Ser-76. A Phosphoserine modification is found at Ser-106. N6-acetyllysine is present on residues Lys-123, Lys-126, and Lys-132. Phosphothreonine is present on Thr-134. N6-acetyllysine; alternate is present on Lys-161. Residue Lys-161 is modified to N6-succinyllysine; alternate. Ser-166 carries the post-translational modification Phosphoserine. Lys-167 carries the N6-acetyllysine; alternate modification. Lys-167 bears the N6-succinyllysine; alternate mark. Ser-184 is subject to Phosphoserine. Arg-204 carries the omega-N-methylarginine modification. ATP contacts are provided by Gln-215, Gly-217, Lys-218, Thr-219, and Ser-220. Thr-219 contacts Mg(2+). N6-acetyllysine; alternate occurs at positions 230 and 239. Lys-230 and Lys-239 each carry N6-succinyllysine; alternate. N6-acetyllysine is present on Lys-240. Residues Lys-261 and Lys-305 each carry the N6-acetyllysine; alternate modification. N6-succinyllysine; alternate is present on residues Lys-261 and Lys-305. Position 312 (Asp-312) interacts with Mg(2+). An N6-acetyllysine; alternate modification is found at Lys-427. Residue Lys-427 is modified to N6-succinyllysine; alternate. Lys-434 bears the N6-acetyllysine mark. Positions 473 and 475 each coordinate ATP. N6-acetyllysine; alternate is present on residues Lys-498, Lys-506, Lys-531, and Lys-539. N6-succinyllysine; alternate is present on residues Lys-498, Lys-506, Lys-531, and Lys-539. Lys-541 is subject to N6-acetyllysine.

This sequence belongs to the ATPase alpha/beta chains family. As to quaternary structure, homotrimer. Component of the ATP synthase complex composed at least of ATP5F1A/subunit alpha, ATP5F1B/subunit beta, ATP5MC1/subunit c (homooctomer), MT-ATP6/subunit a, MT-ATP8/subunit 8, ATP5ME/subunit e, ATP5MF/subunit f, ATP5MG/subunit g, ATP5MK/subunit k, ATP5MJ/subunit j, ATP5F1C/subunit gamma, ATP5F1D/subunit delta, ATP5F1E/subunit epsilon, ATP5PF/subunit F6, ATP5PB/subunit b, ATP5PD/subunit d, ATP5PO/subunit OSCP. ATP synthase complex consists of a soluble F(1) head domain (subunits alpha(3) and beta(3)) - the catalytic core - and a membrane F(0) domain - the membrane proton channel (subunits c, a, 8, e, f, g, k and j). These two domains are linked by a central stalk (subunits gamma, delta, and epsilon) rotating inside the F1 region and a stationary peripheral stalk (subunits F6, b, d, and OSCP). Interacts with ATPAF2. Interacts with HRG; the interaction occurs on the surface of T-cells and alters the cell morphology when associated with concanavalin (in vitro). Interacts with PLG (angiostatin peptide); the interaction inhibits most of the angiogenic properties of angiostatin. Interacts with BLOC1S1. Interacts with BCL2L1 isoform BCL-X(L); the interaction mediates the association of BCL2L1 isoform BCL-X(L) with the mitochondrial membrane F(1)F(0) ATP synthase and enhances neurons metabolic efficiency. Interacts with CLN5 and PPT1. Interacts with S100A1; this interaction increases F1-ATPase activity. Interacts with ABCB7; this interaction allows the regulation of cellular iron homeostasis and cellular reactive oxygen species (ROS) levels in cardiomyocytes. Acetylated on lysine residues. BLOC1S1 is required for acetylation. As to expression, heart muscle (at protein level). Heart and liver.

Its subcellular location is the mitochondrion inner membrane. It localises to the cell membrane. Its function is as follows. Subunit alpha, of the mitochondrial membrane ATP synthase complex (F(1)F(0) ATP synthase or Complex V) that produces ATP from ADP in the presence of a proton gradient across the membrane which is generated by electron transport complexes of the respiratory chain. ATP synthase complex consist of a soluble F(1) head domain - the catalytic core - and a membrane F(1) domain - the membrane proton channel. These two domains are linked by a central stalk rotating inside the F(1) region and a stationary peripheral stalk. During catalysis, ATP synthesis in the catalytic domain of F(1) is coupled via a rotary mechanism of the central stalk subunits to proton translocation. In vivo, can only synthesize ATP although its ATP hydrolase activity can be activated artificially in vitro. With the catalytic subunit beta (ATP5F1B), forms the catalytic core in the F(1) domain. Subunit alpha does not bear the catalytic high-affinity ATP-binding sites. The polypeptide is ATP synthase F(1) complex subunit alpha, mitochondrial (Bos taurus (Bovine)).